Consider the following 398-residue polypeptide: Glutamyl-tRNA reductase (398 aa).

Substrate is bound by residues 45–48 (TCNR), Ser-88, 93–95 (EDQ), and Gln-99. Cys-46 serves as the catalytic Nucleophile. 168–173 (GAGKMG) lines the NADP(+) pocket.

Belongs to the glutamyl-tRNA reductase family. As to quaternary structure, homodimer.

The enzyme catalyses (S)-4-amino-5-oxopentanoate + tRNA(Glu) + NADP(+) = L-glutamyl-tRNA(Glu) + NADPH + H(+). Its pathway is porphyrin-containing compound metabolism; protoporphyrin-IX biosynthesis; 5-aminolevulinate from L-glutamyl-tRNA(Glu): step 1/2. Functionally, catalyzes the NADPH-dependent reduction of glutamyl-tRNA(Glu) to glutamate 1-semialdehyde (GSA). The polypeptide is Glutamyl-tRNA reductase (hemA) (Methanothermobacter marburgensis (strain ATCC BAA-927 / DSM 2133 / JCM 14651 / NBRC 100331 / OCM 82 / Marburg) (Methanobacterium thermoautotrophicum)).